Here is a 130-residue protein sequence, read N- to C-terminus: P antigen family member 5 (130 aa).

2 disordered regions span residues 1-88 (MQAP…TDVE) and 101-130 (DAPGDGPDVREGTLPTFDPTKVLEAGEGQL). Positions 14-26 (TREEVRDMSEHVT) are enriched in basic and acidic residues. Positions 27–42 (RSQSSERGNDQESSQP) are enriched in polar residues. 2 positions are modified to phosphothreonine: Thr-113 and Thr-116.

Belongs to the GAGE family.

This chain is P antigen family member 5 (PAGE5), found in Homo sapiens (Human).